Reading from the N-terminus, the 156-residue chain is 6,7-dimethyl-8-ribityllumazine synthase (156 aa).

Residues F22, 57-59, and 81-83 each bind 5-amino-6-(D-ribitylamino)uracil; these read AYE and SVI. Residue 86-87 participates in (2S)-2-hydroxy-3-oxobutyl phosphate binding; the sequence is GT. H89 serves as the catalytic Proton donor. F114 contributes to the 5-amino-6-(D-ribitylamino)uracil binding site. R128 is a binding site for (2S)-2-hydroxy-3-oxobutyl phosphate.

It belongs to the DMRL synthase family. Forms an icosahedral capsid composed of 60 subunits, arranged as a dodecamer of pentamers.

The catalysed reaction is (2S)-2-hydroxy-3-oxobutyl phosphate + 5-amino-6-(D-ribitylamino)uracil = 6,7-dimethyl-8-(1-D-ribityl)lumazine + phosphate + 2 H2O + H(+). It participates in cofactor biosynthesis; riboflavin biosynthesis; riboflavin from 2-hydroxy-3-oxobutyl phosphate and 5-amino-6-(D-ribitylamino)uracil: step 1/2. Its function is as follows. Catalyzes the formation of 6,7-dimethyl-8-ribityllumazine by condensation of 5-amino-6-(D-ribitylamino)uracil with 3,4-dihydroxy-2-butanone 4-phosphate. This is the penultimate step in the biosynthesis of riboflavin. The polypeptide is 6,7-dimethyl-8-ribityllumazine synthase (Photobacterium leiognathi).